A 491-amino-acid polypeptide reads, in one-letter code: 3-octaprenyl-4-hydroxybenzoate carboxy-lyase (491 aa).

Asn172 serves as a coordination point for Mn(2+). Prenylated FMN is bound by residues Ile175–Arg177, Arg189–Leu191, and Arg194–Gly195. Glu238 serves as a coordination point for Mn(2+). Asp287 acts as the Proton donor in catalysis.

The protein belongs to the UbiD family. In terms of assembly, homohexamer. Prenylated FMN serves as cofactor. The cofactor is Mn(2+).

Its subcellular location is the cell membrane. The catalysed reaction is a 4-hydroxy-3-(all-trans-polyprenyl)benzoate + H(+) = a 2-(all-trans-polyprenyl)phenol + CO2. It participates in cofactor biosynthesis; ubiquinone biosynthesis. Functionally, catalyzes the decarboxylation of 3-octaprenyl-4-hydroxy benzoate to 2-octaprenylphenol, an intermediate step in ubiquinone biosynthesis. The polypeptide is 3-octaprenyl-4-hydroxybenzoate carboxy-lyase (Histophilus somni (strain 129Pt) (Haemophilus somnus)).